Consider the following 110-residue polypeptide: Large ribosomal subunit protein uL22 (110 aa).

It belongs to the universal ribosomal protein uL22 family. As to quaternary structure, part of the 50S ribosomal subunit.

Its function is as follows. This protein binds specifically to 23S rRNA; its binding is stimulated by other ribosomal proteins, e.g. L4, L17, and L20. It is important during the early stages of 50S assembly. It makes multiple contacts with different domains of the 23S rRNA in the assembled 50S subunit and ribosome. Functionally, the globular domain of the protein is located near the polypeptide exit tunnel on the outside of the subunit, while an extended beta-hairpin is found that lines the wall of the exit tunnel in the center of the 70S ribosome. This chain is Large ribosomal subunit protein uL22, found in Maridesulfovibrio salexigens (strain ATCC 14822 / DSM 2638 / NCIMB 8403 / VKM B-1763) (Desulfovibrio salexigens).